A 555-amino-acid polypeptide reads, in one-letter code: Glutamine--tRNA ligase (555 aa).

The 'HIGH' region signature appears at Pro34–His44. Residues Glu35 to Asn37 and His41 to Ser47 contribute to the ATP site. L-glutamine contacts are provided by Asp67 and Tyr212. Residues Thr231, Arg261–Leu262, and Met269–Lys271 each bind ATP. The short motif at Val268–Arg272 is the 'KMSKS' region element. Residues Thr317–Glu324 form an interaction with tRNA region.

This sequence belongs to the class-I aminoacyl-tRNA synthetase family. Monomer.

The protein localises to the cytoplasm. It carries out the reaction tRNA(Gln) + L-glutamine + ATP = L-glutaminyl-tRNA(Gln) + AMP + diphosphate. In Salmonella choleraesuis (strain SC-B67), this protein is Glutamine--tRNA ligase.